Here is a 440-residue protein sequence, read N- to C-terminus: Chromosome partition protein MukF (440 aa).

The tract at residues Leu208–Ile236 is leucine-zipper.

Belongs to the MukF family. In terms of assembly, interacts, and probably forms a ternary complex, with MukE and MukB via its C-terminal region. The complex formation is stimulated by calcium or magnesium. It is required for an interaction between MukE and MukB.

The protein resides in the cytoplasm. It is found in the nucleoid. Functionally, involved in chromosome condensation, segregation and cell cycle progression. May participate in facilitating chromosome segregation by condensation DNA from both sides of a centrally located replisome during cell division. Not required for mini-F plasmid partitioning. Probably acts via its interaction with MukB and MukE. Overexpression results in anucleate cells. It has a calcium binding activity. The protein is Chromosome partition protein MukF of Escherichia coli (strain ATCC 8739 / DSM 1576 / NBRC 3972 / NCIMB 8545 / WDCM 00012 / Crooks).